The sequence spans 398 residues: Serine/threonine-protein phosphatase 2A activator (398 aa).

3 residues coordinate ATP: arginine 137, threonine 142, and glycine 143. Residues glycine 197 and aspartate 203 each coordinate Mg(2+). ATP is bound by residues proline 293, glutamine 296, and histidine 297. The segment covering 343–352 (PVATAPPPPA) has biased composition (pro residues). The disordered stretch occupies residues 343–398 (PVATAPPPPAESLSIEQNVGDSSSESSDNSVVLRPSTSSSSLVAAAEGSGDKPSKE). Low complexity predominate over residues 363–388 (DSSSESSDNSVVLRPSTSSSSLVAAA).

The protein belongs to the PTPA-type PPIase family. In terms of assembly, associates with PP2A heterodimeric core enzyme PP2A(D), composed of a catalytic subunit (subunit C) and a constant regulatory subunit (PR65 or subunit A). Interacts with the catalytic subunit Pp4-19C of the serine/threonine-protein phosphatase 4 (PP4) complex; thereby mediating basal localization of the Miranda (Mira) complex; probably by facilitating the dephosphorylation of Mira.

It localises to the cytoplasm. The protein resides in the nucleus. It carries out the reaction [protein]-peptidylproline (omega=180) = [protein]-peptidylproline (omega=0). PPIases accelerate the folding of proteins. It catalyzes the cis-trans isomerization of proline imidic peptide bonds in oligopeptides. Acts as a regulatory subunit for serine/threonine-protein phosphatase 2A (PP2A). Modulates PP2A activity or substrate specificity, probably by inducing a conformational change in the catalytic subunit, a proposed direct target of the PPIase. Acts as mediator for the basal localization of the Miranda (Mira) complex during mitosis of larval neuroblast asymmetric division. Associates with the phosphatase 4 (PP4) complex to mediate basal localization of Mira; probably by facilitating the dephosphorylation of Mira. Cortical association of Mira mediated by the PTPA-PP4 complex seems to be independent of aPKC activity. The sequence is that of Serine/threonine-protein phosphatase 2A activator from Drosophila melanogaster (Fruit fly).